The chain runs to 199 residues: COMM domain-containing protein 2 (199 aa).

Residues 123 to 190 (SYHSLEWRLD…QALEEMKTNH (68 aa)) form the COMM domain.

This sequence belongs to the COMM domain-containing protein 2 family. In terms of assembly, component of the commander complex consisting of the CCC subcomplex and the retriever subcomplex. Component of the CCC (COMMD/CCDC22/CCDC93) subcomplex consisting of COMMD1, COMMD2, COMMD3, COMMD4, COMMD5, COMMD6, COMMD7, COMMD8, COMMD9, COMMD10, CCDC22 and CCDC93; within the complex forms a heterodimer with COMMD3. Interacts with RELA, RELB, NFKB1/p105, NFKB2/p100. Interacts with CCDC22, CCDC93, SCNN1B, CUL3, CUL4B, CUL5, CUL7.

Its subcellular location is the cytoplasm. Its function is as follows. Scaffold protein in the commander complex that is essential for endosomal recycling of transmembrane cargos; the commander complex is composed of the CCC subcomplex and the retriever subcomplex. May modulate activity of cullin-RING E3 ubiquitin ligase (CRL) complexes. May down-regulate activation of NF-kappa-B. The sequence is that of COMM domain-containing protein 2 (Commd2) from Mus musculus (Mouse).